Reading from the N-terminus, the 271-residue chain is Dehydrodolichyl diphosphate synthase 7 (271 aa).

Residues 24 to 41 (FLFRVLCVGPIPTNISFI) traverse the membrane as a helical segment.

Belongs to the UPP synthase family. Mg(2+) is required as a cofactor.

It is found in the endoplasmic reticulum membrane. It functions in the pathway protein modification; protein glycosylation. In terms of biological role, catalyzes cis-prenyl chain elongation to produce the polyprenyl backbone of dolichol, a glycosyl carrier-lipid required for the biosynthesis of several classes of glycoprotein. The sequence is that of Dehydrodolichyl diphosphate synthase 7 from Arabidopsis thaliana (Mouse-ear cress).